Consider the following 173-residue polypeptide: Protein GrpE (173 aa).

This sequence belongs to the GrpE family. Homodimer.

It is found in the cytoplasm. In terms of biological role, participates actively in the response to hyperosmotic and heat shock by preventing the aggregation of stress-denatured proteins, in association with DnaK and GrpE. It is the nucleotide exchange factor for DnaK and may function as a thermosensor. Unfolded proteins bind initially to DnaJ; upon interaction with the DnaJ-bound protein, DnaK hydrolyzes its bound ATP, resulting in the formation of a stable complex. GrpE releases ADP from DnaK; ATP binding to DnaK triggers the release of the substrate protein, thus completing the reaction cycle. Several rounds of ATP-dependent interactions between DnaJ, DnaK and GrpE are required for fully efficient folding. The sequence is that of Protein GrpE from Campylobacter fetus subsp. fetus (strain 82-40).